A 319-amino-acid chain; its full sequence is Free fatty acid receptor 3 (319 aa).

Residues M1–S15 lie on the Extracellular side of the membrane. A helical membrane pass occupies residues V16 to V36. Topologically, residues N37–P43 are cytoplasmic. Residues V44–L64 traverse the membrane as a helical segment. Residues P65–T98 are Extracellular-facing. C84 and C165 are joined by a disulfide. The chain crosses the membrane as a helical span at residues S99–Y119. Topologically, residues K120–Q127 are cytoplasmic. Residues A128 to V148 traverse the membrane as a helical segment. The Extracellular portion of the chain corresponds to T149–E183. Residues M184 to I206 traverse the membrane as a helical segment. Residues L207–R218 are Cytoplasmic-facing. The chain crosses the membrane as a helical span at residues V219 to M239. Residues S240–R254 are Extracellular-facing. A helical membrane pass occupies residues S255–S275. The Cytoplasmic portion of the chain corresponds to S276 to S319.

It belongs to the G-protein coupled receptor 1 family. Expressed in the sympathetic nervous system.

It is found in the cell membrane. Functionally, g protein-coupled receptor that is activated by a major product of dietary fiber digestion, the short chain fatty acids (SCFAs), and that plays a role in the regulation of whole-body energy homeostasis and in intestinal immunity. In omnivorous mammals, the short chain fatty acids acetate, propionate and butyrate are produced primarily by the gut microbiome that metabolizes dietary fibers. SCFAs serve as a source of energy but also act as signaling molecules. That G protein-coupled receptor is probably coupled to the pertussis toxin-sensitive, G(i/o)-alpha family of G proteins. Its activation results in the formation of inositol 1,4,5-trisphosphate, the mobilization of intracellular calcium, the phosphorylation of the MAPK3/ERK1 and MAPK1/ERK2 kinases and the inhibition of intracellular cAMP accumulation. Activated by SCFAs and by beta-hydroxybutyrate, a ketone body produced by the liver upon starvation, it inhibits N-type calcium channels and modulates the activity of sympathetic neurons through a signaling cascade involving the beta and gamma subunits of its coupled G protein, phospholipase C and MAP kinases. Thereby, it may regulate energy expenditure through the control of the sympathetic nervous system that controls for instance heart rate. Upon activation by SCFAs accumulating in the intestine, it may also signal to the brain via neural circuits which in turn would regulate intestinal gluconeogenesis. May also control the production of hormones involved in whole-body energy homeostasis. May for instance, regulate blood pressure through renin secretion. May also regulate secretion of the PYY peptide by enteroendocrine cells and control gut motility, intestinal transit rate, and the harvesting of energy from SCFAs produced by gut microbiota. May also indirectly regulate the production of LEP/Leptin, a hormone acting on the CNS to inhibit food intake, in response to the presence of short-chain fatty acids in the intestine. Finally, may also play a role in glucose homeostasis. Besides its role in energy homeostasis, may play a role in intestinal immunity. May mediate the activation of the inflammatory and immune response by SCFAs in the gut, regulating the rapid production of chemokines and cytokines by intestinal epithelial cells. This Rattus norvegicus (Rat) protein is Free fatty acid receptor 3 (Ffar3).